The following is a 96-amino-acid chain: Small ribosomal subunit protein bS16 (96 aa).

This sequence belongs to the bacterial ribosomal protein bS16 family.

In Vesicomyosocius okutanii subsp. Calyptogena okutanii (strain HA), this protein is Small ribosomal subunit protein bS16.